Reading from the N-terminus, the 182-residue chain is ATP synthase subunit delta (182 aa).

It belongs to the ATPase delta chain family. In terms of assembly, F-type ATPases have 2 components, F(1) - the catalytic core - and F(0) - the membrane proton channel. F(1) has five subunits: alpha(3), beta(3), gamma(1), delta(1), epsilon(1). CF(0) has four main subunits: a(1), b(1), b'(1) and c(10-14). The alpha and beta chains form an alternating ring which encloses part of the gamma chain. F(1) is attached to F(0) by a central stalk formed by the gamma and epsilon chains, while a peripheral stalk is formed by the delta, b and b' chains.

Its subcellular location is the cellular thylakoid membrane. In terms of biological role, f(1)F(0) ATP synthase produces ATP from ADP in the presence of a proton or sodium gradient. F-type ATPases consist of two structural domains, F(1) containing the extramembraneous catalytic core and F(0) containing the membrane proton channel, linked together by a central stalk and a peripheral stalk. During catalysis, ATP synthesis in the catalytic domain of F(1) is coupled via a rotary mechanism of the central stalk subunits to proton translocation. Its function is as follows. This protein is part of the stalk that links CF(0) to CF(1). It either transmits conformational changes from CF(0) to CF(1) or is implicated in proton conduction. This Synechococcus sp. (strain JA-2-3B'a(2-13)) (Cyanobacteria bacterium Yellowstone B-Prime) protein is ATP synthase subunit delta.